A 262-amino-acid polypeptide reads, in one-letter code: Serine/arginine-rich splicing factor 10 (262 aa).

The region spanning 10-88 (TSLFVRNVAD…RQIEIQFAQG (79 aa)) is the RRM domain. Residues Ser23, Ser106, and Ser108 each carry the phosphoserine modification. Residues 116–126 (YRRSRSRSYER) are compositionally biased toward basic and acidic residues. Residues 116-262 (YRRSRSRSYE…SWTSPKSSGH (147 aa)) form a disordered region. 3 positions are modified to phosphoserine: Ser129, Ser131, and Ser133. The span at 134 to 150 (FDYNYRRSYSPRNSRPT) shows a compositional bias: low complexity. Phosphoserine occurs at positions 158, 160, and 168. Composition is skewed to basic residues over residues 165–186 (FKHRNRSFSRSKSNSRSRSKSQ) and 194–207 (KSRSRSASHTKTRG). The segment covering 209–234 (SKTDSKTHYKSGSRYEKESRKKEPPR) has biased composition (basic and acidic residues). Residues 252 to 262 (RSWTSPKSSGH) are compositionally biased toward low complexity.

Belongs to the splicing factor SR family. The phosphorylated but not the dephosphorylated form interacts with TRA2B/SFRS10. The dephosphorylated form interacts with SNRNP70. Isoform 1 interacts with FUS C-terminus. Isoform 3 interacts with FUS C-terminus. Interacts with YTHDC1, leading to inhibit RNA-binding activity of SRSF10. Post-translationally, phosphorylated. Fully dephosphorylated in mitosis and partially dephosphorylated on heat shock. Widely expressed.

The protein resides in the nucleus speckle. It localises to the cytoplasm. Its function is as follows. Splicing factor that in its dephosphorylated form acts as a general repressor of pre-mRNA splicing. Seems to interfere with the U1 snRNP 5'-splice recognition of SNRNP70. Required for splicing repression in M-phase cells and after heat shock. Also acts as a splicing factor that specifically promotes exon skipping during alternative splicing. Interaction with YTHDC1, a RNA-binding protein that recognizes and binds N6-methyladenosine (m6A)-containing RNAs, prevents SRSF10 from binding to its mRNA-binding sites close to m6A-containing regions, leading to inhibit exon skipping during alternative splicing. May be involved in regulation of alternative splicing in neurons, with isoform 1 acting as a positive and isoform 3 as a negative regulator. This chain is Serine/arginine-rich splicing factor 10 (SRSF10), found in Homo sapiens (Human).